Consider the following 227-residue polypeptide: Cytochrome c oxidase subunit 2 (227 aa).

Residues 1–14 (MAYPMQLGLQDATS) are Mitochondrial intermembrane-facing. The chain crosses the membrane as a helical span at residues 15–45 (PIMEELTDFHDHTLMIVFLISTLVLYIISMM). The Mitochondrial matrix segment spans residues 46–59 (LTTKLTHTSTMDAQ). The helical transmembrane segment at 60–87 (EVETIWTVLPAVILVMIALPSLRILYMM) threads the bilayer. The Mitochondrial intermembrane segment spans residues 88 to 227 (DEINDPYLTV…QFESWASSMT (140 aa)). Residues histidine 161, cysteine 196, glutamate 198, cysteine 200, histidine 204, and methionine 207 each contribute to the Cu cation site. A Mg(2+)-binding site is contributed by glutamate 198.

This sequence belongs to the cytochrome c oxidase subunit 2 family. Component of the cytochrome c oxidase (complex IV, CIV), a multisubunit enzyme composed of 14 subunits. The complex is composed of a catalytic core of 3 subunits MT-CO1, MT-CO2 and MT-CO3, encoded in the mitochondrial DNA, and 11 supernumerary subunits COX4I, COX5A, COX5B, COX6A, COX6B, COX6C, COX7A, COX7B, COX7C, COX8 and NDUFA4, which are encoded in the nuclear genome. The complex exists as a monomer or a dimer and forms supercomplexes (SCs) in the inner mitochondrial membrane with NADH-ubiquinone oxidoreductase (complex I, CI) and ubiquinol-cytochrome c oxidoreductase (cytochrome b-c1 complex, complex III, CIII), resulting in different assemblies (supercomplex SCI(1)III(2)IV(1) and megacomplex MCI(2)III(2)IV(2)). Found in a complex with TMEM177, COA6, COX18, COX20, SCO1 and SCO2. Interacts with TMEM177 in a COX20-dependent manner. Interacts with COX20. Interacts with COX16. Cu cation serves as cofactor.

Its subcellular location is the mitochondrion inner membrane. The enzyme catalyses 4 Fe(II)-[cytochrome c] + O2 + 8 H(+)(in) = 4 Fe(III)-[cytochrome c] + 2 H2O + 4 H(+)(out). In terms of biological role, component of the cytochrome c oxidase, the last enzyme in the mitochondrial electron transport chain which drives oxidative phosphorylation. The respiratory chain contains 3 multisubunit complexes succinate dehydrogenase (complex II, CII), ubiquinol-cytochrome c oxidoreductase (cytochrome b-c1 complex, complex III, CIII) and cytochrome c oxidase (complex IV, CIV), that cooperate to transfer electrons derived from NADH and succinate to molecular oxygen, creating an electrochemical gradient over the inner membrane that drives transmembrane transport and the ATP synthase. Cytochrome c oxidase is the component of the respiratory chain that catalyzes the reduction of oxygen to water. Electrons originating from reduced cytochrome c in the intermembrane space (IMS) are transferred via the dinuclear copper A center (CU(A)) of subunit 2 and heme A of subunit 1 to the active site in subunit 1, a binuclear center (BNC) formed by heme A3 and copper B (CU(B)). The BNC reduces molecular oxygen to 2 water molecules using 4 electrons from cytochrome c in the IMS and 4 protons from the mitochondrial matrix. The polypeptide is Cytochrome c oxidase subunit 2 (MT-CO2) (Cratogeomys bursarius (Plains pocket gopher)).